Reading from the N-terminus, the 1304-residue chain is DNA-directed RNA polymerase subunit beta' (1304 aa).

Positions 1-23 (MSEKGRFSAGLSRQAADGNKADA) are disordered. Residues Cys-241, Cys-315, Cys-322, and Cys-325 each contribute to the Zn(2+) site. Residues 1256-1268 (AAEPEPDEEEEEP) are compositionally biased toward acidic residues. The interval 1256–1304 (AAEPEPDEEEEEPAVLPELPPRLILEDDQLIDDSTPAFDELEEDDDEEE) is disordered. The span at 1269 to 1278 (AVLPELPPRL) shows a compositional bias: low complexity. Positions 1294–1304 (DELEEDDDEEE) are enriched in acidic residues.

This sequence belongs to the RNA polymerase beta' chain family. RpoC2 subfamily. In terms of assembly, in cyanobacteria the RNAP catalytic core is composed of 2 alpha, 1 beta, 1 beta', 1 gamma and 1 omega subunit. When a sigma factor is associated with the core the holoenzyme is formed, which can initiate transcription. Requires Zn(2+) as cofactor.

It carries out the reaction RNA(n) + a ribonucleoside 5'-triphosphate = RNA(n+1) + diphosphate. In terms of biological role, DNA-dependent RNA polymerase catalyzes the transcription of DNA into RNA using the four ribonucleoside triphosphates as substrates. In Synechococcus sp. (strain JA-2-3B'a(2-13)) (Cyanobacteria bacterium Yellowstone B-Prime), this protein is DNA-directed RNA polymerase subunit beta'.